The primary structure comprises 449 residues: Putative transporter C83.11 (449 aa).

9 helical membrane passes run 7-27, 47-67, 84-104, 109-129, 136-156, 164-184, 205-225, 255-275, and 278-298; these read LSHILFHEKVGFLLLCLLWYI, VTLTFLQFGFVAFFSAVCLLF, VLYTTLPLSIFQIGGHVFGSL, IPVSTVHTVKALSPLFTVLAY, VYSAMTYFSLVPLTFGVTLAC, IVGLLYALISTCIFVSQNIFG, LNLLLYSSGVAFIVMIPVWLY, ILAFTLLSIISPVAYSIASLI, and IFVIVVSIIWFQQATNFTQGS. 2 positions are modified to phosphoserine: serine 348 and serine 352. Tyrosine 355 is subject to Phosphotyrosine. Residues 382 to 415 show a composition bias toward polar residues; the sequence is NSVYSNEGVTSSVSGNATPASVRQSTQNDFSNSN. The interval 382–416 is disordered; the sequence is NSVYSNEGVTSSVSGNATPASVRQSTQNDFSNSNI.

The protein belongs to the TPT transporter family.

Its subcellular location is the membrane. The chain is Putative transporter C83.11 from Schizosaccharomyces pombe (strain 972 / ATCC 24843) (Fission yeast).